The primary structure comprises 109 residues: Large ribosomal subunit protein uL23 (109 aa).

Belongs to the universal ribosomal protein uL23 family. As to quaternary structure, part of the 50S ribosomal subunit. Contacts protein L29, and trigger factor when it is bound to the ribosome.

In terms of biological role, one of the early assembly proteins it binds 23S rRNA. One of the proteins that surrounds the polypeptide exit tunnel on the outside of the ribosome. Forms the main docking site for trigger factor binding to the ribosome. In Chlorobium phaeobacteroides (strain BS1), this protein is Large ribosomal subunit protein uL23.